Reading from the N-terminus, the 447-residue chain is Argininosuccinate synthase (447 aa).

ATP is bound by residues 17 to 25 and Ala-43; that span reads AFSGGLDTS. Position 99 (Tyr-99) interacts with L-citrulline. Gly-129 and Thr-131 together coordinate ATP. L-aspartate contacts are provided by Thr-131, Asn-135, and Asp-136. Residue Asn-135 coordinates L-citrulline. Asp-136 provides a ligand contact to ATP. L-citrulline-binding residues include Arg-139 and Ser-192. Asp-194 serves as a coordination point for ATP. 3 residues coordinate L-citrulline: Thr-201, Glu-203, and Glu-280.

It belongs to the argininosuccinate synthase family. Type 2 subfamily. Homotetramer.

Its subcellular location is the cytoplasm. The enzyme catalyses L-citrulline + L-aspartate + ATP = 2-(N(omega)-L-arginino)succinate + AMP + diphosphate + H(+). It participates in amino-acid biosynthesis; L-arginine biosynthesis; L-arginine from L-ornithine and carbamoyl phosphate: step 2/3. In Escherichia coli O139:H28 (strain E24377A / ETEC), this protein is Argininosuccinate synthase.